Here is a 171-residue protein sequence, read N- to C-terminus: 3-hydroxydecanoyl-[acyl-carrier-protein] dehydratase (171 aa).

His-70 is a catalytic residue.

It belongs to the thioester dehydratase family. FabA subfamily. Homodimer.

It localises to the cytoplasm. The enzyme catalyses a (3R)-hydroxyacyl-[ACP] = a (2E)-enoyl-[ACP] + H2O. It carries out the reaction (3R)-hydroxydecanoyl-[ACP] = (2E)-decenoyl-[ACP] + H2O. The catalysed reaction is (2E)-decenoyl-[ACP] = (3Z)-decenoyl-[ACP]. The protein operates within lipid metabolism; fatty acid biosynthesis. Its function is as follows. Necessary for the introduction of cis unsaturation into fatty acids. Catalyzes the dehydration of (3R)-3-hydroxydecanoyl-ACP to E-(2)-decenoyl-ACP and then its isomerization to Z-(3)-decenoyl-ACP. Can catalyze the dehydratase reaction for beta-hydroxyacyl-ACPs with saturated chain lengths up to 16:0, being most active on intermediate chain length. The chain is 3-hydroxydecanoyl-[acyl-carrier-protein] dehydratase from Xanthomonas oryzae pv. oryzae (strain MAFF 311018).